A 240-amino-acid chain; its full sequence is 1-(5-phosphoribosyl)-5-[(5-phosphoribosylamino)methylideneamino] imidazole-4-carboxamide isomerase (240 aa).

Asp8 (proton acceptor) is an active-site residue. The active-site Proton donor is the Asp129.

The protein belongs to the HisA/HisF family.

The protein localises to the cytoplasm. The catalysed reaction is 1-(5-phospho-beta-D-ribosyl)-5-[(5-phospho-beta-D-ribosylamino)methylideneamino]imidazole-4-carboxamide = 5-[(5-phospho-1-deoxy-D-ribulos-1-ylimino)methylamino]-1-(5-phospho-beta-D-ribosyl)imidazole-4-carboxamide. Its pathway is amino-acid biosynthesis; L-histidine biosynthesis; L-histidine from 5-phospho-alpha-D-ribose 1-diphosphate: step 4/9. The protein is 1-(5-phosphoribosyl)-5-[(5-phosphoribosylamino)methylideneamino] imidazole-4-carboxamide isomerase of Oceanobacillus iheyensis (strain DSM 14371 / CIP 107618 / JCM 11309 / KCTC 3954 / HTE831).